Reading from the N-terminus, the 338-residue chain is Phenylalanine--tRNA ligase alpha subunit (338 aa).

Residue Glu-253 participates in Mg(2+) binding.

It belongs to the class-II aminoacyl-tRNA synthetase family. Phe-tRNA synthetase alpha subunit type 1 subfamily. In terms of assembly, tetramer of two alpha and two beta subunits. Requires Mg(2+) as cofactor.

It is found in the cytoplasm. It carries out the reaction tRNA(Phe) + L-phenylalanine + ATP = L-phenylalanyl-tRNA(Phe) + AMP + diphosphate + H(+). The sequence is that of Phenylalanine--tRNA ligase alpha subunit from Geotalea uraniireducens (strain Rf4) (Geobacter uraniireducens).